Here is a 1148-residue protein sequence, read N- to C-terminus: Envelopment polyprotein (1148 aa).

A signal peptide spans Met1–Ala23. Residues Ala24–Met495 are Lumenal-facing. 6 disulfides stabilise this stretch: Cys34–Cys159, Cys68–Cys165, Cys117–Cys136, Cys141–Cys146, Cys183–Cys193, and Cys218–Cys257. An N-linked (GlcNAc...) asparagine; by host glycan is attached at Asn142. A glycan (N-linked (GlcNAc...) asparagine; by host) is linked at Asn357. Disulfide bonds link Cys386/Cys445, Cys390/Cys399, Cys415/Cys434, and Cys462/Cys485. Asn409 carries N-linked (GlcNAc...) asparagine; by host glycosylation. A helical membrane pass occupies residues Leu496–Leu516. The Cytoplasmic portion of the chain corresponds to Lys517 to Phe637. Residues Cys526 to Lys543 are binding to the ribonucleoprotein. 2 consecutive CCHC-type zinc fingers follow at residues Cys555–Cys575 and Cys580–Cys601. 3 binding to the ribonucleoprotein regions span residues Phe598–Leu615, Lys602–Lys613, and Met621–Ser635. An ITAM domain is found at Met621–Cys644. The YxxL signature appears at Tyr625–Leu628. A helical membrane pass occupies residues Phe638–Ala658. Over Glu659–Asn1114 the chain is Lumenal. 8 cysteine pairs are disulfide-bonded: Cys745–Cys780, Cys749–Cys787, Cys761–Cys894, Cys775–Cys905, Cys790–Cys913, Cys816–Cys825, Cys833–Cys842, and Cys873–Cys877. Positions Tyr767 to Cys787 are fusion loop. N-linked (GlcNAc...) asparagine; by host glycosylation is present at Asn937. Intrachain disulfides connect Cys979–Cys1009, Cys1002–Cys1054, Cys1019–Cys1024, Cys1055–Cys1060, and Cys1094–Cys1098. Residues Trp1115–Cys1135 form a helical membrane-spanning segment. Binding to the ribonucleoprotein stretches follow at residues Leu1131–Arg1143 and Leu1131–Pro1148. Residues Cys1136–Pro1148 lie on the Cytoplasmic side of the membrane.

Belongs to the hantavirus envelope glycoprotein family. In terms of assembly, homodimer. Homotetramer; forms heterotetrameric Gn-Gc spikes in the pre-fusion conformation. Interacts (via C-terminus) with the nucleoprotein. Interacts with host TUFM; this interaction contributes to the virus-induced degradation of mitochondria by autophagy, which leads to degradation of host MAVS and inhibition of type I interferon (IFN) responses. Interacts with host MAP1LC3B; this interaction contributes to the virus-induced degradation of mitochondria by autophagy, which leads to degradation of host MAVS and inhibition of type I interferon (IFN) responses. Homodimer. Homotetramer; forms heterotetrameric Gn-Gc spikes in the pre-fusion conformation. Homotrimer; forms homotrimer in the post-fusion conformation at acidic pH. Interacts (via C-terminus) with the nucleoprotein. In terms of processing, envelope polyprotein precursor is quickly cleaved in vivo just after synthesis, presumably by host signal peptidase.

Its subcellular location is the virion membrane. The protein resides in the host cell surface. The protein localises to the host Golgi apparatus membrane. It is found in the host endoplasmic reticulum membrane. It localises to the host mitochondrion. In terms of biological role, forms homotetramers with glycoprotein C at the surface of the virion. Attaches the virion to host cell receptors including integrin ITGAV/ITGB3. This attachment induces virion internalization predominantly through clathrin-dependent endocytosis. Mediates the assembly and budding of infectious virus particles through its interaction with the nucleocapsid protein and the viral genome. May dysregulate normal immune and endothelial cell responses through an ITAM motif. Translocates to mitochondria, binds to host TUFM and recruits MAP1LC3B. These interactions induce mitochondrial autophagy and therefore destruction of host MAVS leading to inhibition of type I interferon (IFN) responses. Concomitant breakdown of glycoprotein N is apparently prevented by the nucleoprotein that may inhibit Gn-stimulated autophagosome-lysosome fusion. Interacts with the viral genomic RNA. Forms homotetramers with glycoprotein N at the surface of the virion. Attaches the virion to host cell receptors including integrin ITGAV/ITGB3. This attachment induces virion internalization predominantly through clathrin-dependent endocytosis. Class II fusion protein that promotes fusion of viral membrane with host endosomal membrane after endocytosis of the virion. In Puumala virus (strain K27), this protein is Envelopment polyprotein (GP).